Here is a 423-residue protein sequence, read N- to C-terminus: Tumor necrosis factor receptor superfamily member 19 (423 aa).

The N-terminal stretch at 1–29 (MALKVLLEQEKTFFTLLVLLGYLSCKVTC) is a signal peptide. Residues 30–170 (ESGDCRQQEF…TASSPRDTAL (141 aa)) are Extracellular-facing. 3 TNFR-Cys repeats span residues 33-72 (DCRQ…DAQC), 74-114 (TCRL…DAIC), and 116-149 (DCLP…EPHC). Disulfide bonds link C34–C46, C49–C62, C52–C72, C75–C89, C92–C106, C95–C114, C117–C135, and C138–C149. N-linked (GlcNAc...) asparagine glycosylation is present at N105. The helical transmembrane segment at 171–191 (AAVICSALATVLLALLILCVI) threads the bilayer. Topologically, residues 192-423 (YCKRQFMEKK…LQVRQRLGSL (232 aa)) are cytoplasmic.

Associates with TRAF1, TRAF2, TRAF3 and TRAF5. Interacts with LINGO1. Highly expressed in prostate. Detected at lower levels in thymus, spleen, testis, uterus, small intestine, colon and peripheral blood leukocytes.

It localises to the membrane. Its function is as follows. Can mediate activation of JNK and NF-kappa-B. May promote caspase-independent cell death. In Homo sapiens (Human), this protein is Tumor necrosis factor receptor superfamily member 19 (TNFRSF19).